Here is a 265-residue protein sequence, read N- to C-terminus: Hydroxyethylthiazole kinase (265 aa).

Residue Met-50 participates in substrate binding. ATP contacts are provided by Arg-125 and Thr-171. Gly-198 contacts substrate.

Belongs to the Thz kinase family. The cofactor is Mg(2+).

The enzyme catalyses 5-(2-hydroxyethyl)-4-methylthiazole + ATP = 4-methyl-5-(2-phosphooxyethyl)-thiazole + ADP + H(+). It participates in cofactor biosynthesis; thiamine diphosphate biosynthesis; 4-methyl-5-(2-phosphoethyl)-thiazole from 5-(2-hydroxyethyl)-4-methylthiazole: step 1/1. Its function is as follows. Catalyzes the phosphorylation of the hydroxyl group of 4-methyl-5-beta-hydroxyethylthiazole (THZ). This chain is Hydroxyethylthiazole kinase, found in Salmonella newport (strain SL254).